A 154-amino-acid chain; its full sequence is uncharacterized protein (154 aa).

The signal sequence occupies residues 1 to 21; that stretch reads MSISSGSFAQPAAVVSSPGVT.

Belongs to the ivy family.

Its subcellular location is the periplasm. This is an uncharacterized protein from Yersinia pestis.